Consider the following 214-residue polypeptide: MTAIRAPRRRASSDVQGGFDFSRPDEIVCGVDEAGRGPLAGPVVAAAVILDPAQPIDGLDDSKVLSAKKRDALYDLIVTRSHAYCVASASVDEIDTLNILHATMLAMKRAVEGLSVLPTLAQIDGNRCPTLSVRAEAIVSGDALVPSISAASILAKVTRDRMLVDLHERFPVYGFNVHAGYGTAKHLAALREHGPCEAHRRSFAPVRAALDLIR.

The region spanning 26–214 is the RNase H type-2 domain; sequence EIVCGVDEAG…PVRAALDLIR (189 aa). The a divalent metal cation site is built by Asp32, Glu33, and Asp124.

This sequence belongs to the RNase HII family. The cofactor is Mn(2+). It depends on Mg(2+) as a cofactor.

The protein localises to the cytoplasm. The catalysed reaction is Endonucleolytic cleavage to 5'-phosphomonoester.. Endonuclease that specifically degrades the RNA of RNA-DNA hybrids. The sequence is that of Ribonuclease HII from Burkholderia cenocepacia (strain HI2424).